The primary structure comprises 61 residues: Small ribosomal subunit protein uS14 (61 aa).

Zn(2+)-binding residues include Cys24, Cys27, Cys40, and Cys43.

Belongs to the universal ribosomal protein uS14 family. Zinc-binding uS14 subfamily. Part of the 30S ribosomal subunit. Contacts proteins S3 and S10. It depends on Zn(2+) as a cofactor.

Functionally, binds 16S rRNA, required for the assembly of 30S particles and may also be responsible for determining the conformation of the 16S rRNA at the A site. This is Small ribosomal subunit protein uS14 from Oleidesulfovibrio alaskensis (strain ATCC BAA-1058 / DSM 17464 / G20) (Desulfovibrio alaskensis).